The following is a 388-amino-acid chain: Xylose isomerase (388 aa).

Catalysis depends on residues His-54 and Asp-57. Positions 181, 217, 220, 245, 255, 257, and 287 each coordinate Mg(2+).

It belongs to the xylose isomerase family. Homotetramer. Mg(2+) serves as cofactor.

Its subcellular location is the cytoplasm. The catalysed reaction is alpha-D-xylose = alpha-D-xylulofuranose. The polypeptide is Xylose isomerase (Streptomyces corchorusii (Streptomyces chibaensis)).